The chain runs to 179 residues: Large ribosomal subunit protein uL5 (179 aa).

The protein belongs to the universal ribosomal protein uL5 family. As to quaternary structure, part of the 50S ribosomal subunit; part of the 5S rRNA/L5/L18/L25 subcomplex. Contacts the 5S rRNA and the P site tRNA. Forms a bridge to the 30S subunit in the 70S ribosome.

In terms of biological role, this is one of the proteins that bind and probably mediate the attachment of the 5S RNA into the large ribosomal subunit, where it forms part of the central protuberance. In the 70S ribosome it contacts protein S13 of the 30S subunit (bridge B1b), connecting the 2 subunits; this bridge is implicated in subunit movement. Contacts the P site tRNA; the 5S rRNA and some of its associated proteins might help stabilize positioning of ribosome-bound tRNAs. The sequence is that of Large ribosomal subunit protein uL5 from Actinobacillus pleuropneumoniae serotype 5b (strain L20).